A 281-amino-acid chain; its full sequence is 4-diphosphocytidyl-2-C-methyl-D-erythritol kinase (281 aa).

The active site involves Lys-15. Position 98 to 108 (98 to 108 (PTGAGLGGGSS)) interacts with ATP. Residue Asp-140 is part of the active site.

This sequence belongs to the GHMP kinase family. IspE subfamily.

The enzyme catalyses 4-CDP-2-C-methyl-D-erythritol + ATP = 4-CDP-2-C-methyl-D-erythritol 2-phosphate + ADP + H(+). Its pathway is isoprenoid biosynthesis; isopentenyl diphosphate biosynthesis via DXP pathway; isopentenyl diphosphate from 1-deoxy-D-xylulose 5-phosphate: step 3/6. Functionally, catalyzes the phosphorylation of the position 2 hydroxy group of 4-diphosphocytidyl-2C-methyl-D-erythritol. The sequence is that of 4-diphosphocytidyl-2-C-methyl-D-erythritol kinase from Neisseria meningitidis serogroup C (strain 053442).